We begin with the raw amino-acid sequence, 328 residues long: MGVYLGKYCYIMIIMLVLVLGKEVRSQLLKNGYYSTSCPKAESIVRSTVESHFDSDPTISPGLLRLHFHDCFVQGCDGSVLIKGKSAEQAALPNLGLRGLEVIDDAKARLEAVCPGVVSCADILALAARDSVDLSDGPSWRVPTGRKDGRISLATEASNLPSPLDSVAVQKQKFQDKGLDTHDLVTLLGAHTIGQTDCLFFRYRLYNFTVTGNSDPTISPSFLTQLKTLCPPNGDGSKRVALDIGSPSKFDESFFKNLRDGNAILESDQRLWSDAETNAVVKKYASRLRGLLGFRFDYEFGKAMIKMSSIDVKTDVDGEVRKVCSKVN.

The signal sequence occupies residues 1 to 26 (MGVYLGKYCYIMIIMLVLVLGKEVRS). 4 disulfides stabilise this stretch: C38-C114, C71-C76, C120-C324, and C198-C230. The active-site Proton acceptor is H69. Residues D70, V73, G75, D77, and S79 each coordinate Ca(2+). P161 contacts substrate. H191 is a binding site for heme b. T192 contacts Ca(2+). N207 carries an N-linked (GlcNAc...) asparagine glycan. The Ca(2+) site is built by D243, S246, and D251.

The protein belongs to the peroxidase family. Classical plant (class III) peroxidase subfamily. Requires heme b as cofactor. It depends on Ca(2+) as a cofactor.

The protein resides in the secreted. The catalysed reaction is 2 a phenolic donor + H2O2 = 2 a phenolic radical donor + 2 H2O. Functionally, removal of H(2)O(2), oxidation of toxic reductants, biosynthesis and degradation of lignin, suberization, auxin catabolism, response to environmental stresses such as wounding, pathogen attack and oxidative stress. These functions might be dependent on each isozyme/isoform in each plant tissue. This is Peroxidase 25 (PER25) from Arabidopsis thaliana (Mouse-ear cress).